The sequence spans 528 residues: Major facilitator superfamily multidrug transporter mdr3 (528 aa).

Residues 1-37 (MLAMAASAEETNRQSNAGRRSVISPSEAPPEAEQSDV) are disordered. Transmembrane regions (helical) follow at residues 50–70 (FILI…YILI), 91–111 (WHVG…GKLG), 119–139 (ILVL…CSAF), 149–169 (ARAL…AIAG), 180–200 (MIFS…GVVG), 211–231 (WVMW…LWVI), and 241–261 (AATL…LLLL). Residue Asn-262 is glycosylated (N-linked (GlcNAc...) asparagine). The next 5 membrane-spanning stretches (helical) occupy residues 272 to 292 (GWST…LGLF), 340 to 360 (VITS…GCIL), 375 to 395 (FWSF…STTI), 410 to 430 (SLVN…AGTV), and 448 to 468 (ALWS…VFAV).

The protein belongs to the major facilitator superfamily.

Its subcellular location is the cell membrane. Major facilitator superfamily transporter that confers resistance to azoles such as itraconazole. The polypeptide is Major facilitator superfamily multidrug transporter mdr3 (Aspergillus fumigatus (strain ATCC MYA-4609 / CBS 101355 / FGSC A1100 / Af293) (Neosartorya fumigata)).